We begin with the raw amino-acid sequence, 56 residues long: Large ribosomal subunit protein bL33 (56 aa).

It belongs to the bacterial ribosomal protein bL33 family.

This chain is Large ribosomal subunit protein bL33, found in Halorhodospira halophila (strain DSM 244 / SL1) (Ectothiorhodospira halophila (strain DSM 244 / SL1)).